A 174-amino-acid polypeptide reads, in one-letter code: Guided entry of tail-anchored proteins factor 1 (174 aa).

Topologically, residues 1–8 (MSAAEADR) are lumenal. Residues 9-29 (WAWLLVLSFVFGCNVLRILLP) form a helical membrane-spanning segment. At 30–99 (SFSFFMSRVL…VKARTAQLAK (70 aa)) the chain is on the cytoplasmic side. A coiled-coil region spans residues 39–94 (LQKDAEQESQMRAEIQGMKQELSTVNMMDEFARYARLERKINKMTDKLKTHVKART). Residues 39-97 (LQKDAEQESQMRAEIQGMKQELSTVNMMDEFARYARLERKINKMTDKLKTHVKARTAQL) form an interaction with GET3/TRC40 region. A helical transmembrane segment spans residues 100–120 (IKWVISVAFYILQAALMVSLI). Residues 121-148 (WKYYSVPVAVVPSKWITPLDRLVAFPTR) are Lumenal-facing. Residues 149 to 169 (VAGGVGITCWILVCNKVVAIV) form a helical membrane-spanning segment. At 170–174 (LHPFS) the chain is on the cytoplasmic side.

The protein belongs to the WRB/GET1 family. As to quaternary structure, component of the Golgi to ER traffic (GET) complex, which is composed of GET1/WRB, CAMLG/GET2 and GET3. Within the complex, GET1 and CAMLG form a heterotetramer which is stabilized by phosphatidylinositol binding and which binds to the GET3 homodimer. Interacts with CAMLG (via C-terminus). GET3 shows a higher affinity for CAMLG than for GET1.

It localises to the endoplasmic reticulum membrane. Required for the post-translational delivery of tail-anchored (TA) proteins to the endoplasmic reticulum. Together with CAMLG/GET2, acts as a membrane receptor for soluble GET3/TRC40, which recognizes and selectively binds the transmembrane domain of TA proteins in the cytosol. Required to ensure correct topology and ER insertion of CAMLG. The chain is Guided entry of tail-anchored proteins factor 1 from Bos taurus (Bovine).